A 413-amino-acid chain; its full sequence is NADPH dehydrogenase afvA (413 aa).

53–56 contacts FMN; it reads APLC. Tyr58 is a substrate binding site. Positions 88 and 130 each coordinate FMN. 211–214 serves as a coordination point for substrate; the sequence is HAAH. Residues Arg264 and 370–371 contribute to the FMN site; that span reads GR.

Belongs to the NADH:flavin oxidoreductase/NADH oxidase family. NamA subfamily. The cofactor is FMN.

The catalysed reaction is A + NADPH + H(+) = AH2 + NADP(+). It functions in the pathway secondary metabolite biosynthesis. NADPH dehydrogenase; part of the gene cluster that mediates the biosynthesis of aflavarin, a bicoumarin that exhibits anti-insectan activity against the fungivorous beetle C.hemipterus. The protein is NADPH dehydrogenase afvA of Aspergillus flavus (strain ATCC 200026 / FGSC A1120 / IAM 13836 / NRRL 3357 / JCM 12722 / SRRC 167).